A 137-amino-acid polypeptide reads, in one-letter code: Putative pre-16S rRNA nuclease (137 aa).

It belongs to the YqgF nuclease family.

It localises to the cytoplasm. Could be a nuclease involved in processing of the 5'-end of pre-16S rRNA. The polypeptide is Putative pre-16S rRNA nuclease (Bacillus cytotoxicus (strain DSM 22905 / CIP 110041 / 391-98 / NVH 391-98)).